Consider the following 408-residue polypeptide: Histidine--tRNA ligase (408 aa).

Belongs to the class-II aminoacyl-tRNA synthetase family. In terms of assembly, homodimer.

The protein localises to the cytoplasm. It carries out the reaction tRNA(His) + L-histidine + ATP = L-histidyl-tRNA(His) + AMP + diphosphate + H(+). This chain is Histidine--tRNA ligase, found in Campylobacter jejuni subsp. jejuni serotype O:23/36 (strain 81-176).